The sequence spans 79 residues: Succinate dehydrogenase assembly factor 1, mitochondrial (79 aa).

This sequence belongs to the complex I LYR family. SDHAF1 subfamily. As to quaternary structure, interacts with SDH2 within an SDH1-SDH2 subcomplex.

It is found in the mitochondrion matrix. In terms of biological role, plays an essential role in the assembly of succinate dehydrogenase (SDH), an enzyme complex (also referred to as respiratory complex II) that is a component of both the tricarboxylic acid (TCA) cycle and the mitochondrial electron transport chain, and which couples the oxidation of succinate to fumarate with the reduction of ubiquinone (coenzyme Q) to ubiquinol. Promotes maturation of the iron-sulfur protein subunit SDH2 of the SDH catalytic dimer, protecting it from the deleterious effects of oxidants. Acts together with SDHAF3 (SDH7). In Saccharomyces cerevisiae (strain YJM789) (Baker's yeast), this protein is Succinate dehydrogenase assembly factor 1, mitochondrial.